The sequence spans 90 residues: Cell division topological specificity factor (90 aa).

This sequence belongs to the MinE family.

Prevents the cell division inhibition by proteins MinC and MinD at internal division sites while permitting inhibition at polar sites. This ensures cell division at the proper site by restricting the formation of a division septum at the midpoint of the long axis of the cell. In Brucella abortus (strain S19), this protein is Cell division topological specificity factor.